A 266-amino-acid polypeptide reads, in one-letter code: Thiazole synthase (266 aa).

The Schiff-base intermediate with DXP role is filled by Lys106. Residues Gly167, 193 to 194 (AG), and 215 to 216 (NT) contribute to the 1-deoxy-D-xylulose 5-phosphate site.

Belongs to the ThiG family. As to quaternary structure, homotetramer. Forms heterodimers with either ThiH or ThiS.

It is found in the plastid. The protein resides in the chloroplast. The enzyme catalyses [ThiS sulfur-carrier protein]-C-terminal-Gly-aminoethanethioate + 2-iminoacetate + 1-deoxy-D-xylulose 5-phosphate = [ThiS sulfur-carrier protein]-C-terminal Gly-Gly + 2-[(2R,5Z)-2-carboxy-4-methylthiazol-5(2H)-ylidene]ethyl phosphate + 2 H2O + H(+). Its pathway is cofactor biosynthesis; thiamine diphosphate biosynthesis. Catalyzes the rearrangement of 1-deoxy-D-xylulose 5-phosphate (DXP) to produce the thiazole phosphate moiety of thiamine. Sulfur is provided by the thiocarboxylate moiety of the carrier protein ThiS. In vitro, sulfur can be provided by H(2)S. This Cyanidium caldarium (Red alga) protein is Thiazole synthase.